Consider the following 473-residue polypeptide: Photosystem II CP43 reaction center protein (473 aa).

Residues 1–14 (MKTLYSLRRFYHVE) constitute a propeptide that is removed on maturation. Threonine 15 carries the post-translational modification N-acetylthreonine. Position 15 is a phosphothreonine (threonine 15). 5 helical membrane-spanning segments follow: residues 69–93 (LFEVAHFVPEKPMYEQGLILLPHLA), 134–155 (LIGPETLEESFPFFGYVWKDKN), 178–200 (KAVWFGGVYDTWAPGGGDVRKIT), 255–275 (KPFAWARRAFIWSGEAYLSYS), and 291–312 (WFNNTAYPSEFYGPTGPEASQA). Glutamate 367 provides a ligand contact to [CaMn4O5] cluster. Residues 447-471 (RARAAAAGFEKGIDRETEPVFFMNP) traverse the membrane as a helical segment.

It belongs to the PsbB/PsbC family. PsbC subfamily. In terms of assembly, PSII is composed of 1 copy each of membrane proteins PsbA, PsbB, PsbC, PsbD, PsbE, PsbF, PsbH, PsbI, PsbJ, PsbK, PsbL, PsbM, PsbT, PsbX, PsbY, PsbZ, Psb30/Ycf12, at least 3 peripheral proteins of the oxygen-evolving complex and a large number of cofactors. It forms dimeric complexes. The cofactor is Binds multiple chlorophylls and provides some of the ligands for the Ca-4Mn-5O cluster of the oxygen-evolving complex. It may also provide a ligand for a Cl- that is required for oxygen evolution. PSII binds additional chlorophylls, carotenoids and specific lipids..

The protein resides in the plastid. It is found in the chloroplast thylakoid membrane. In terms of biological role, one of the components of the core complex of photosystem II (PSII). It binds chlorophyll and helps catalyze the primary light-induced photochemical processes of PSII. PSII is a light-driven water:plastoquinone oxidoreductase, using light energy to abstract electrons from H(2)O, generating O(2) and a proton gradient subsequently used for ATP formation. The polypeptide is Photosystem II CP43 reaction center protein (Staurastrum punctulatum (Green alga)).